The sequence spans 380 residues: mRNA cap guanine-N(7) methyltransferase (380 aa).

The region spanning 24-333 (SRIFFMRNMN…MYLVFGFRKK (310 aa)) is the mRNA cap 0 methyltransferase domain. Residue 33–34 (NN) coordinates mRNA. Positions 37, 62, 84, 117, 139, and 144 each coordinate S-adenosyl-L-methionine. A disordered region spans residues 336–380 (EAEKTEEEPATTKPVAESESEQKEVTESEEKEDQEDCEHQEAQTN).

It belongs to the class I-like SAM-binding methyltransferase superfamily. mRNA cap 0 methyltransferase family.

The protein resides in the nucleus. The catalysed reaction is a 5'-end (5'-triphosphoguanosine)-ribonucleoside in mRNA + S-adenosyl-L-methionine = a 5'-end (N(7)-methyl 5'-triphosphoguanosine)-ribonucleoside in mRNA + S-adenosyl-L-homocysteine. Functionally, mRNA-capping methyltransferase that methylates the N7 position of the added guanosine to the 5'-cap structure of mRNAs. Binds RNA containing 5'-terminal GpppC. The chain is mRNA cap guanine-N(7) methyltransferase (tag-72) from Caenorhabditis elegans.